We begin with the raw amino-acid sequence, 663 residues long: DNA topoisomerase 4 subunit B (663 aa).

ATP is bound by residues Y7, N47, D74, 114 to 120 (GLHGVGA), and K341. The interval 386–418 (REAARKAREDARSGKKNKRKDTLLSGKLTPAQS) is disordered. Residues 387–398 (EAARKAREDARS) are compositionally biased toward basic and acidic residues. Residues 424-538 (NELYLVEGDS…AGRVFIALPP (115 aa)) enclose the Toprim domain. The Mg(2+) site is built by E430, D503, and D505.

The protein belongs to the type II topoisomerase family. ParE type 2 subfamily. As to quaternary structure, heterotetramer composed of ParC and ParE. It depends on Mg(2+) as a cofactor. Mn(2+) serves as cofactor. Ca(2+) is required as a cofactor.

It catalyses the reaction ATP-dependent breakage, passage and rejoining of double-stranded DNA.. In terms of biological role, topoisomerase IV is essential for chromosome segregation. It relaxes supercoiled DNA. Performs the decatenation events required during the replication of a circular DNA molecule. This chain is DNA topoisomerase 4 subunit B, found in Staphylococcus aureus (strain MRSA252).